Consider the following 123-residue polypeptide: Inter-alpha-trypsin inhibitor (123 aa).

BPTI/Kunitz inhibitor domains lie at C5–C55 and C61–C111. 6 disulfides stabilise this stretch: C5–C55, C14–C38, C30–C51, C61–C111, C70–C94, and C86–C107. N24 is a glycosylation site (N-linked (GlcNAc...) asparagine).

Its subcellular location is the secreted. In terms of biological role, this inhibitory fragment, released from native ITI after limited proteolysis with trypsin, contains two homologous domains. Whereas the second domain is a strong inhibitor of trypsin, the first domain interacts weakly with PMN-granulocytic elastase and not at all with pancreatic elastase. This Capra hircus (Goat) protein is Inter-alpha-trypsin inhibitor.